The sequence spans 561 residues: DNA ligase B (561 aa).

The active-site N6-AMP-lysine intermediate is K125.

It belongs to the NAD-dependent DNA ligase family. LigB subfamily.

It catalyses the reaction NAD(+) + (deoxyribonucleotide)n-3'-hydroxyl + 5'-phospho-(deoxyribonucleotide)m = (deoxyribonucleotide)n+m + AMP + beta-nicotinamide D-nucleotide.. Catalyzes the formation of phosphodiester linkages between 5'-phosphoryl and 3'-hydroxyl groups in double-stranded DNA using NAD as a coenzyme and as the energy source for the reaction. The polypeptide is DNA ligase B (Salmonella agona (strain SL483)).